The chain runs to 74 residues: Anaphase-promoting complex subunit 13 (74 aa).

The segment at Leu-33–Lys-56 is disordered.

Belongs to the APC13 family. The mammalian APC/C is composed at least of 14 distinct subunits ANAPC1, ANAPC2, CDC27/APC3, ANAPC4, ANAPC5, CDC16/APC6, ANAPC7, CDC23/APC8, ANAPC10, ANAPC11, CDC26/APC12, ANAPC13, ANAPC15 and ANAPC16 that assemble into a complex of at least 19 chains with a combined molecular mass of around 1.2 MDa; APC/C interacts with FZR1 and FBXO5.

It localises to the nucleus. Its pathway is protein modification; protein ubiquitination. Its function is as follows. Component of the anaphase promoting complex/cyclosome (APC/C), a cell cycle-regulated E3 ubiquitin ligase that controls progression through mitosis and the G1 phase of the cell cycle. The APC/C complex acts by mediating ubiquitination and subsequent degradation of target proteins: it mainly mediates the formation of 'Lys-11'-linked polyubiquitin chains and, to a lower extent, the formation of 'Lys-48'- and 'Lys-63'-linked polyubiquitin chains. The APC/C complex catalyzes assembly of branched 'Lys-11'-/'Lys-48'-linked branched ubiquitin chains on target proteins. This Mus musculus (Mouse) protein is Anaphase-promoting complex subunit 13 (Anapc13).